The sequence spans 270 residues: 2-oxoglutarate synthase subunit KorB (270 aa).

In terms of assembly, heterotetramer of the KorA, KorB, KorC and KorD subunits.

It carries out the reaction 2 oxidized [2Fe-2S]-[ferredoxin] + 2-oxoglutarate + CoA = succinyl-CoA + 2 reduced [2Fe-2S]-[ferredoxin] + CO2 + H(+). The protein is 2-oxoglutarate synthase subunit KorB (korB) of Methanocaldococcus jannaschii (strain ATCC 43067 / DSM 2661 / JAL-1 / JCM 10045 / NBRC 100440) (Methanococcus jannaschii).